The sequence spans 134 residues: FK506-binding protein 2 (134 aa).

A signal peptide spans methionine 1–serine 19. Positions glycine 39–glutamate 127 constitute a PPIase FKBP-type domain. The Prevents secretion from ER signature appears at asparagine 131 to leucine 134.

Belongs to the FKBP-type PPIase family. FKBP2 subfamily.

It localises to the endoplasmic reticulum. It carries out the reaction [protein]-peptidylproline (omega=180) = [protein]-peptidylproline (omega=0). With respect to regulation, inhibited by both FK506 and rapamycin. Functionally, PPIases accelerate the folding of proteins. It catalyzes the cis-trans isomerization of proline imidic peptide bonds in oligopeptides. This is FK506-binding protein 2 (fpr2) from Aspergillus fumigatus (strain ATCC MYA-4609 / CBS 101355 / FGSC A1100 / Af293) (Neosartorya fumigata).